A 74-amino-acid chain; its full sequence is Acyclotide phyb-K (74 aa).

Residues 1-24 (MARVNSLKCALCFIVLILFVQLNC) form the signal peptide. A propeptide spanning residues 25–43 (IPETRVMAVELSRVFLQTS) is cleaved from the precursor. Intrachain disulfides connect C47/C64, C51/C66, and C56/C71.

Contains 3 disulfide bonds. In terms of tissue distribution, expressed in midvein, lamina and periphery of leaves (at protein level).

Its function is as follows. Probably participates in a plant defense mechanism. The protein is Acyclotide phyb-K of Petunia hybrida (Petunia).